A 175-amino-acid polypeptide reads, in one-letter code: Disulfide bond formation protein B (175 aa).

Residues 1-13 (MTALTRFAHSRSS) lie on the Cytoplasmic side of the membrane. The helical transmembrane segment at 14–30 (WFLLTGTAIGLEAAALY) threads the bilayer. Residues 31–48 (FQYVMKLDPCVMCIYQRL) are Periplasmic-facing. Cys-40 and Cys-43 form a disulfide bridge. A helical membrane pass occupies residues 49–64 (AVFGILVAGLIGMTAP). Residues 65-71 (KYRLIRI) lie on the Cytoplasmic side of the membrane. A helical membrane pass occupies residues 72-89 (LGASCWAVSATWGLKLAL). Topologically, residues 90 to 144 (ALVNMQNNPSPFATCSFLPEFPTWMPLHEWFPAVMLPTGMCTDLPWRFMDVTMAE) are periplasmic. Cys-104 and Cys-130 are joined by a disulfide. The chain crosses the membrane as a helical span at residues 145–163 (WMVVVFSTFLVIWLLFIVP). Residues 164–175 (ILSGSTKPSLYK) lie on the Cytoplasmic side of the membrane.

This sequence belongs to the DsbB family.

The protein resides in the cell inner membrane. Functionally, required for disulfide bond formation in some periplasmic proteins. Acts by oxidizing the DsbA protein. The protein is Disulfide bond formation protein B of Shewanella sp. (strain W3-18-1).